Here is an 88-residue protein sequence, read N- to C-terminus: Translation initiation factor IF-1 1 (88 aa).

An S1-like domain is found at 1–72 (MSKEDMIELE…TKGRINFRHP (72 aa)). The interval 66 to 88 (RINFRHPTANPGAGPRPSHHHRR) is disordered.

It belongs to the IF-1 family. In terms of assembly, component of the 30S ribosomal translation pre-initiation complex which assembles on the 30S ribosome in the order IF-2 and IF-3, IF-1 and N-formylmethionyl-tRNA(fMet); mRNA recruitment can occur at any time during PIC assembly.

Its subcellular location is the cytoplasm. One of the essential components for the initiation of protein synthesis. Stabilizes the binding of IF-2 and IF-3 on the 30S subunit to which N-formylmethionyl-tRNA(fMet) subsequently binds. Helps modulate mRNA selection, yielding the 30S pre-initiation complex (PIC). Upon addition of the 50S ribosomal subunit IF-1, IF-2 and IF-3 are released leaving the mature 70S translation initiation complex. The protein is Translation initiation factor IF-1 1 of Chromobacterium violaceum (strain ATCC 12472 / DSM 30191 / JCM 1249 / CCUG 213 / NBRC 12614 / NCIMB 9131 / NCTC 9757 / MK).